The sequence spans 345 residues: N-acetyl-gamma-glutamyl-phosphate reductase (345 aa).

Residue Cys-149 is part of the active site.

It belongs to the NAGSA dehydrogenase family. Type 1 subfamily.

It is found in the cytoplasm. It carries out the reaction N-acetyl-L-glutamate 5-semialdehyde + phosphate + NADP(+) = N-acetyl-L-glutamyl 5-phosphate + NADPH + H(+). It participates in amino-acid biosynthesis; L-arginine biosynthesis; N(2)-acetyl-L-ornithine from L-glutamate: step 3/4. Catalyzes the NADPH-dependent reduction of N-acetyl-5-glutamyl phosphate to yield N-acetyl-L-glutamate 5-semialdehyde. The polypeptide is N-acetyl-gamma-glutamyl-phosphate reductase (Desulforapulum autotrophicum (strain ATCC 43914 / DSM 3382 / VKM B-1955 / HRM2) (Desulfobacterium autotrophicum)).